Here is a 343-residue protein sequence, read N- to C-terminus: NADH-ubiquinone oxidoreductase chain 2 (343 aa).

8 helical membrane passes run 1-21 (MNPM…TMIT), 59-81 (YYLI…ALNT), 96-116 (TIIT…SWLP), 150-170 (NITL…LGSL), 178-198 (LMAF…TMAP), 200-220 (ISTL…LLIN), 241-261 (MTIL…SGFM), and 270-290 (LISM…LLSL).

It belongs to the complex I subunit 2 family.

The protein resides in the mitochondrion inner membrane. The catalysed reaction is a ubiquinone + NADH + 5 H(+)(in) = a ubiquinol + NAD(+) + 4 H(+)(out). Core subunit of the mitochondrial membrane respiratory chain NADH dehydrogenase (Complex I) that is believed to belong to the minimal assembly required for catalysis. Complex I functions in the transfer of electrons from NADH to the respiratory chain. The immediate electron acceptor for the enzyme is believed to be ubiquinone. The sequence is that of NADH-ubiquinone oxidoreductase chain 2 (MT-ND2) from Lycodon semicarinatus (Ryukyu odd-tooth snake).